We begin with the raw amino-acid sequence, 242 residues long: Type III pantothenate kinase (242 aa).

5 to 12 contributes to the ATP binding site; the sequence is DLGNTRLK. Substrate contacts are provided by residues Tyr-94 and 100–103; that span reads GCDR. Asp-102 functions as the Proton acceptor in the catalytic mechanism. Position 124 (Thr-124) interacts with ATP. Thr-175 contributes to the substrate binding site.

Belongs to the type III pantothenate kinase family. In terms of assembly, homodimer. It depends on NH4(+) as a cofactor. K(+) serves as cofactor.

It is found in the cytoplasm. It catalyses the reaction (R)-pantothenate + ATP = (R)-4'-phosphopantothenate + ADP + H(+). The protein operates within cofactor biosynthesis; coenzyme A biosynthesis; CoA from (R)-pantothenate: step 1/5. Functionally, catalyzes the phosphorylation of pantothenate (Pan), the first step in CoA biosynthesis. The chain is Type III pantothenate kinase from Psychrobacter cryohalolentis (strain ATCC BAA-1226 / DSM 17306 / VKM B-2378 / K5).